Reading from the N-terminus, the 487-residue chain is Cysteine--tRNA ligase (487 aa).

Residue cysteine 30 coordinates Zn(2+). Positions 32 to 42 (PTVYGHAHLGH) match the 'HIGH' region motif. Cysteine 226, histidine 251, and glutamate 255 together coordinate Zn(2+). A 'KMSKS' region motif is present at residues 283–287 (KMGKS). Residue lysine 286 participates in ATP binding.

This sequence belongs to the class-I aminoacyl-tRNA synthetase family. Monomer. Zn(2+) serves as cofactor.

Its subcellular location is the cytoplasm. It carries out the reaction tRNA(Cys) + L-cysteine + ATP = L-cysteinyl-tRNA(Cys) + AMP + diphosphate. The sequence is that of Cysteine--tRNA ligase (cysS) from Chlorobaculum tepidum (strain ATCC 49652 / DSM 12025 / NBRC 103806 / TLS) (Chlorobium tepidum).